Here is a 235-residue protein sequence, read N- to C-terminus: Purine nucleoside phosphorylase DeoD-type (235 aa).

His4 provides a ligand contact to a purine D-ribonucleoside. Residues Gly20, Arg24, Arg43, and 87 to 90 (RVGT) each bind phosphate. A purine D-ribonucleoside contacts are provided by residues Glu162, 179–181 (EME), and 203–204 (SD). Asp204 functions as the Proton donor in the catalytic mechanism.

The protein belongs to the PNP/UDP phosphorylase family. Homohexamer; trimer of homodimers.

The enzyme catalyses a purine D-ribonucleoside + phosphate = a purine nucleobase + alpha-D-ribose 1-phosphate. It carries out the reaction a purine 2'-deoxy-D-ribonucleoside + phosphate = a purine nucleobase + 2-deoxy-alpha-D-ribose 1-phosphate. Functionally, catalyzes the reversible phosphorolytic breakdown of the N-glycosidic bond in the beta-(deoxy)ribonucleoside molecules, with the formation of the corresponding free purine bases and pentose-1-phosphate. This Bacillus anthracis (strain CDC 684 / NRRL 3495) protein is Purine nucleoside phosphorylase DeoD-type.